We begin with the raw amino-acid sequence, 301 residues long: GTPase Era (301 aa).

The 169-residue stretch at 7-175 (YCGFIAIVGR…AAIVRKHLPE (169 aa)) folds into the Era-type G domain. The G1 stretch occupies residues 15-22 (GRPNVGKS). 15-22 (GRPNVGKS) provides a ligand contact to GTP. Residues 41 to 45 (QTTRH) are G2. The tract at residues 62 to 65 (DTPG) is G3. GTP-binding positions include 62 to 66 (DTPGL) and 124 to 127 (NKVD). The G4 stretch occupies residues 124-127 (NKVD). The G5 stretch occupies residues 154–156 (ISA). Residues 206–283 (LGAELPYSVT…HLELWVKVKS (78 aa)) enclose the KH type-2 domain.

It belongs to the TRAFAC class TrmE-Era-EngA-EngB-Septin-like GTPase superfamily. Era GTPase family. Monomer.

Its subcellular location is the cytoplasm. The protein resides in the cell inner membrane. In terms of biological role, an essential GTPase that binds both GDP and GTP, with rapid nucleotide exchange. Plays a role in 16S rRNA processing and 30S ribosomal subunit biogenesis and possibly also in cell cycle regulation and energy metabolism. The chain is GTPase Era from Cronobacter sakazakii (strain ATCC BAA-894) (Enterobacter sakazakii).